The primary structure comprises 360 residues: MILDRLNFIENKYDELSVKISDPSIMANQKEWRKLCKEHADLEVIVNKYKEYKEATEELEANKEMLSEESDQEMREMINSEIKDLTERKKELEDEIQILLLPKDPNDDKNVFVEIRGGAGGDEAALFAANLFRMYTKYAEKNRWKVELMSANETDIGGFKEVVFMIKGAGAYSKLKYESGAHRVQRVPDTESSGRIHTSTATVAVLPEVDDVEIEINDKDIKIDVFRASGNGGQCVNTTDSAVRITHLPSGLVVSCQDEKSQLKNKEKAMKVLRARLFEQAEAERLAGIAEDRKSQVGTGDRSERIRTYNYPQGRVTDHRINMTLYKLDSFLEGDIDEILNALITEDQAQKMKAMGNTEF.

Q234 is modified (N5-methylglutamine).

The protein belongs to the prokaryotic/mitochondrial release factor family. In terms of processing, methylated by PrmC. Methylation increases the termination efficiency of RF1.

It is found in the cytoplasm. In terms of biological role, peptide chain release factor 1 directs the termination of translation in response to the peptide chain termination codons UAG and UAA. The chain is Peptide chain release factor 1 from Clostridium perfringens (strain 13 / Type A).